Here is a 117-residue protein sequence, read N- to C-terminus: Small ribosomal subunit protein bS6 (117 aa).

A disordered region spans residues 96 to 117 (HAEGPSVQMQKRDERDSRRERR). The span at 105-117 (QKRDERDSRRERR) shows a compositional bias: basic and acidic residues.

This sequence belongs to the bacterial ribosomal protein bS6 family.

Functionally, binds together with bS18 to 16S ribosomal RNA. The sequence is that of Small ribosomal subunit protein bS6 from Ruegeria pomeroyi (strain ATCC 700808 / DSM 15171 / DSS-3) (Silicibacter pomeroyi).